The primary structure comprises 88 residues: Small ribosomal subunit protein bS20 (88 aa).

This sequence belongs to the bacterial ribosomal protein bS20 family.

Binds directly to 16S ribosomal RNA. The chain is Small ribosomal subunit protein bS20 from Micrococcus luteus (strain ATCC 4698 / DSM 20030 / JCM 1464 / CCM 169 / CCUG 5858 / IAM 1056 / NBRC 3333 / NCIMB 9278 / NCTC 2665 / VKM Ac-2230) (Micrococcus lysodeikticus).